Consider the following 498-residue polypeptide: MEAARPAGTFVVVGGGIAGVTCAEQLAINFPAEDILLVTASPVIKAVTNFKQVSKVLEEFDVEEQPSTMLENRFPNIKVIESGVKQLKSDKHCIFTEDGREYVYKKLCLCAGAKPKLICEGNPYVLGIRDTDSAQEFQKQLTKARRIMIVGNGGIALELAYEVEVCEVIWAIKDKAIGNTFFDAGAAEFLTSRLLSEKSEAKLAHKRTIYTVEEAKKETSTKSKADYVGSALGPDWHGGLALKGTEEFSHSIHIETKCEVKKIYLQEEFKIMKKKSLAFPKDHHKSVTVDKEMWPVYVELTNGSIYGCDFLVSATGVTPNVQPFLHGNDFDLGEDGGLRVDEQMRTSLPDIYAAGDICTACWPPSPVWQQMRLWTQARQMGCYAAKCMAAATMGHPIDMDFSFELFAHVTKFFNYKVVLLGKYNAQGLGVDHELMLRCTRGQEYIKVVMHNGRMMGAVLIGETDLEETFENLILNQMDLSSYGEDLLNPDIDIEDYFD.

Methionine 1 bears the N-acetylmethionine mark.

Belongs to the class-I pyridine nucleotide-disulfide oxidoreductase family. PYROXD1 subfamily. The cofactor is FAD.

Its subcellular location is the nucleus. It localises to the cytoplasm. The protein resides in the myofibril. It is found in the sarcomere. Functionally, probable FAD-dependent oxidoreductase; involved in the cellular oxidative stress response. Required for normal sarcomere structure and muscle fiber integrity. In Rattus norvegicus (Rat), this protein is Pyridine nucleotide-disulfide oxidoreductase domain-containing protein 1 (Pyroxd1).